Reading from the N-terminus, the 236-residue chain is MSYNFTDPYEIARFIKEVKKSTPVKVYLKGNLEGVELGSIECYGNNDFYVLFGESDEVATFLTENKDKIVSFRLENDRRNSAIPMLDLLNINARIEPGAIIRDRVSIGDNAVIMMGAVINIGAEIGESTMVDMNAVIGARGKLGKRVHLGAGAVVAGVLEPPSKTPCIIEDDVLIGANAVILEGVKIGKGSVVAAGSVVVEDVPAGVVVAGTPAKIIKSVDEKTKDKTEILDDLRK.

It belongs to the transferase hexapeptide repeat family. DapH subfamily.

It carries out the reaction (S)-2,3,4,5-tetrahydrodipicolinate + acetyl-CoA + H2O = L-2-acetamido-6-oxoheptanedioate + CoA. It participates in amino-acid biosynthesis; L-lysine biosynthesis via DAP pathway; LL-2,6-diaminopimelate from (S)-tetrahydrodipicolinate (acetylase route): step 1/3. Functionally, catalyzes the transfer of an acetyl group from acetyl-CoA to tetrahydrodipicolinate. This Clostridium perfringens (strain ATCC 13124 / DSM 756 / JCM 1290 / NCIMB 6125 / NCTC 8237 / Type A) protein is 2,3,4,5-tetrahydropyridine-2,6-dicarboxylate N-acetyltransferase.